The chain runs to 386 residues: TRIBOA-glucoside O-methyltransferase BX7 (386 aa).

S-adenosyl-L-methionine contacts are provided by G224, D248, M270, and K283. The active-site Proton acceptor is H287.

Belongs to the class I-like SAM-binding methyltransferase superfamily. Cation-independent O-methyltransferase family. COMT subfamily. As to expression, expressed in seedlings and newly formed crown roots. Highest expression in the scutellar node. Low to non detectable levels in cob, tassel and mature organs like husk or leaves.

It carries out the reaction TRIBOA beta-D-glucoside + S-adenosyl-L-methionine = DIMBOA beta-D-glucoside + S-adenosyl-L-homocysteine + H(+). Functionally, O-methyltransferase involved in the benzoxazinoid glucoside biosynthesis. Can use 2,4,7-trihydroxy-2H-1,4-benzoxazin-3(4H)-one 2-D-glucoside (TRIBOA-glucoside) as substrate, but not aglucone TRIBOA, caffeic acid, ferulic acid, apigenin or quercetin. The sequence is that of TRIBOA-glucoside O-methyltransferase BX7 (BX7) from Zea mays (Maize).